Consider the following 117-residue polypeptide: Hainantoxin-XV (117 aa).

Positions 1-20 (MKLCAVIIASLLVCVAVASS) are cleaved as a signal peptide. The segment at 20–55 (SSDNQKEFAQEKEMTREETQSLGEHEKDDEVTGSEE) is disordered. Residues 21–56 (SDNQKEFAQEKEMTREETQSLGEHEKDDEVTGSEER) constitute a propeptide that is removed on maturation. Basic and acidic residues predominate over residues 23–55 (NQKEFAQEKEMTREETQSLGEHEKDDEVTGSEE). 4 disulfide bridges follow: Cys-58–Cys-72, Cys-65–Cys-78, Cys-69–Cys-115, and Cys-71–Cys-91.

It belongs to the neurotoxin 03 (Tx2) family. 02 subfamily. HNTX-XV sub-subfamily. Expressed by the venom gland.

It localises to the secreted. Functionally, putative ion channel inhibitor. This chain is Hainantoxin-XV, found in Cyriopagopus hainanus (Chinese bird spider).